A 1555-amino-acid polypeptide reads, in one-letter code: Probable serine/threonine-protein kinase DDB_G0276181 (1555 aa).

Disordered stretches follow at residues 1–54 (MTSV…NNSF), 138–208 (IIQQ…NSKL), 342–452 (KLKK…DSPF), 486–508 (TTTTTTTTTAPTTTNTNTNIKPL), and 781–850 (NNIN…NQNT). 4 stretches are compositionally biased toward low complexity: residues 14–53 (NNSGGSDGNIKNNNNNNNNNNNNNNNNNNSNSGNNSNNNS), 138–205 (IIQQ…NNNN), 359–378 (SNIANSANKINNKNNDKING), and 395–431 (NNSQSSSSSVSPTTVSPSVSPLSSSPTKPPIILSKKP). In terms of domain architecture, PH spans 58–238 (QVLHTGYLTK…WIEMIKLAIS (181 aa)). Polar residues predominate over residues 437 to 452 (RNISTSDNGSGTDSPF). Composition is skewed to low complexity over residues 486 to 504 (TTTTTTTTTAPTTTNTNTN) and 781 to 832 (NNIN…NNNN). Residues 833–850 (GSGLLSSSPLITISNQNT) show a composition bias toward polar residues. The region spanning 986 to 1309 (VVLHERLGTG…TIIHSISKMI (324 aa)) is the Protein kinase domain. 992–1000 (LGTGATGDI) lines the ATP pocket. The segment at 1012–1031 (RHISNQDSSGSNSSGSGSGH) is disordered. Lys1061 is an ATP binding site. The active-site Proton acceptor is the Asp1156. The segment covering 1340-1376 (VQNNNNNSNNNNNNNNNNNNNNSNSNLNNCNNSSPNL) has biased composition (low complexity). 2 disordered regions span residues 1340-1383 (VQNN…SANN) and 1457-1480 (KKSSLEVHSKHKSKRFSYDGGSSR).

The protein belongs to the protein kinase superfamily. TKL Ser/Thr protein kinase family.

It catalyses the reaction L-seryl-[protein] + ATP = O-phospho-L-seryl-[protein] + ADP + H(+). The enzyme catalyses L-threonyl-[protein] + ATP = O-phospho-L-threonyl-[protein] + ADP + H(+). The chain is Probable serine/threonine-protein kinase DDB_G0276181 from Dictyostelium discoideum (Social amoeba).